Reading from the N-terminus, the 196-residue chain is Signaling threshold-regulating transmembrane adapter 1 (196 aa).

The signal sequence occupies residues 1–24; the sequence is MNQADPRLRAVCLWTLTSAAMSRG. The Extracellular portion of the chain corresponds to 25–40; the sequence is DNCTDLLALGIPSITQ. N-linked (GlcNAc...) asparagine glycosylation is present at asparagine 26. A helical membrane pass occupies residues 41-61; the sequence is AWGLWVLLGAVTLLFLISLAA. Residues 62 to 196 are Cytoplasmic-facing; the sequence is HLSQWTRGRS…AYANSQPAAS (135 aa). A phosphoserine mark is found at serine 80 and serine 83. Tyrosine 90 carries the phosphotyrosine modification. The segment at 90 to 93 is interaction with GRB2; that stretch reads YGNL. A Phosphoserine modification is found at serine 102. Residue tyrosine 127 is modified to Phosphotyrosine. Residues 132–167 form a disordered region; sequence LRPPQGRIPGPGTPVKYSEVVLDSEPKSQASGPEPE. Position 144 is a phosphothreonine (threonine 144). The interval 146 to 151 is interaction with PTPN11; it reads VKYSEV. Phosphotyrosine is present on residues tyrosine 148 and tyrosine 169. The interval 169–172 is interaction with CSK; sequence YASV. Residue serine 182 is modified to Phosphoserine. Phosphotyrosine is present on tyrosine 188. The segment at 188 to 191 is interaction with GRB2; that stretch reads YANS.

As to quaternary structure, homodimer; disulfide-linked. When phosphorylated, interacts with PTPN11/SHP2, GRB2 and CSK. Phosphorylated on tyrosines by LCK, FYN or ZAP70 upon TCR activation; which leads to the recruitment of PTPN11, GRB2 and CSK. Specifically expressed in T- and B-cells. Present in plasma cells but not in germinal center B-cells (at protein level). Expressed in T- and B-cell lymphoma.

Its subcellular location is the cell membrane. In terms of biological role, negatively regulates TCR (T-cell antigen receptor)-mediated signaling in T-cells. Involved in positive selection of T-cells. The chain is Signaling threshold-regulating transmembrane adapter 1 (SIT1) from Homo sapiens (Human).